The sequence spans 452 residues: Zinc finger protein 672 (452 aa).

4 C2H2-type zinc fingers span residues 14-36, 42-64, 70-92, and 99-122; these read YSCS…ERAH, FRCL…RRTH, YICS…LGAH, and CPCR…RRQH. The C2H2-type 5; degenerate zinc-finger motif lies at 128–150; the sequence is RRCPLCARTFRQSALLFHQARAH. C2H2-type zinc fingers lie at residues 163–185, 199–221, 227–249, 255–277, 283–305, 311–333, 339–361, 367–389, and 395–417; these read HRCA…ARIH, HQCG…LQTH, FKCP…QRTH, YACG…RRSH, HACA…QRIH, FACP…RRTH, YRCE…RRNH, HKCP…RKTH, and AECA…QRAH.

This sequence belongs to the krueppel C2H2-type zinc-finger protein family.

It is found in the nucleus. Functionally, may be involved in transcriptional regulation. The sequence is that of Zinc finger protein 672 from Homo sapiens (Human).